A 134-amino-acid polypeptide reads, in one-letter code: Acyl carrier protein, mitochondrial (134 aa).

Residues 1-46 (MFRTAALTAARVARPAVASAVRAGVARPAFVQAVPKVAAFQAVRFY) constitute a mitochondrion transit peptide. Residues 55–131 (DEVFSRIAQV…KAVEYILSQP (77 aa)) enclose the Carrier domain. Residue Ser91 is modified to O-(pantetheine 4'-phosphoryl)serine.

This sequence belongs to the acyl carrier protein (ACP) family. Complex I is composed of about 30 different subunits. In terms of processing, 4'-phosphopantetheine is transferred from CoA to a specific serine of apo-ACP by acpS. This modification is essential for activity because fatty acids are bound in thioester linkage to the sulfhydryl of the prosthetic group.

The protein resides in the mitochondrion. Its pathway is lipid metabolism; fatty acid biosynthesis. Carrier of the growing fatty acid chain in fatty acid biosynthesis. May be involved in the synthesis of very-long-chain fatty acids. Accessory and non-catalytic subunit of the mitochondrial membrane respiratory chain NADH dehydrogenase (Complex I), which functions in the transfer of electrons from NADH to the respiratory chain. The chain is Acyl carrier protein, mitochondrial (nuo-12) from Neurospora crassa (strain ATCC 24698 / 74-OR23-1A / CBS 708.71 / DSM 1257 / FGSC 987).